The primary structure comprises 207 residues: Segregation and condensation protein B (207 aa).

This sequence belongs to the ScpB family. As to quaternary structure, homodimer. Homodimerization may be required to stabilize the binding of ScpA to the Smc head domains. Component of a cohesin-like complex composed of ScpA, ScpB and the Smc homodimer, in which ScpA and ScpB bind to the head domain of Smc. The presence of the three proteins is required for the association of the complex with DNA.

The protein localises to the cytoplasm. Functionally, participates in chromosomal partition during cell division. May act via the formation of a condensin-like complex containing Smc and ScpA that pull DNA away from mid-cell into both cell halves. This is Segregation and condensation protein B from Mycoplasmopsis pulmonis (strain UAB CTIP) (Mycoplasma pulmonis).